The following is a 241-amino-acid chain: Linker for activation of T-cells family member 1 (241 aa).

Residues 1–4 (MEAD) lie on the Extracellular side of the membrane. Residues 5–28 (ALSPVELGLLLLPFVVMLLAALCV) traverse the membrane as a helical; Signal-anchor for type III membrane protein segment. Residues C27 and C30 are each lipidated (S-palmitoyl cysteine). Residues 29 to 241 (RCRELPASYD…PDYENLQELN (213 aa)) are Cytoplasmic-facing. Phosphoserine occurs at positions 41, 44, 87, 104, 109, and 112. The tract at residues 78 to 139 (QPDLLPIPRS…DDYPEGYLVV (62 aa)) is disordered. Over residues 97 to 115 (MPSSRQNSDDANSVASYEN) the composition is skewed to polar residues. A compositionally biased stretch (acidic residues) spans 124–133 (DEDEDEDDYP). The tract at residues 136–139 (YLVV) is interaction with PLCG1. Position 175 is a phosphotyrosine (Y175). Interaction with GRB2, GRAP2 and PIK3R1 regions lie at residues 175–178 (YVNV) and 195–198 (YVNV). Residues S199, S212, and S215 each carry the phosphoserine modification. A disordered region spans residues 209-241 (ELASVTSQEVEDEEEEDVDGEEAPDYENLQELN). Over residues 217–233 (EVEDEEEEDVDGEEAPD) the composition is skewed to acidic residues. Phosphotyrosine is present on Y234.

When phosphorylated, interacts directly with the PIK3R1 subunit of phosphoinositide 3-kinase and the SH2 domains of GRB2, GRAP, GRAP2, PLCG1 and PLCG2. Interacts indirectly with CBL, SOS, VAV, and LCP2. Interacts with SHB, SKAP2 and CLNK. Interacts with FCGR1A. Interacts with GRB2, PLCG1 and THEMIS upon TCR activation in thymocytes. Interacts with THEMIS2. Phosphorylated on tyrosines by ZAP70 upon TCR activation, or by SYK upon other immunoreceptor activation; which leads to the recruitment of multiple signaling molecules. Is one of the most prominently tyrosine-phosphorylated proteins detected following TCR engagement. May be dephosphorylated by PTPRJ. Post-translationally, palmitoylation of Cys-27 and Cys-30 is required for raft targeting and efficient phosphorylation. In terms of processing, phosphorylated on tyrosines by ZAP70 upon TCR activation, or by SYK upon other immunoreceptor activation; which leads to the recruitment of multiple signaling molecules. Is one of the most prominently tyrosine-phosphorylated proteins detected following TCR engagement. May be dephosphorylated by PTPRJ. Phosphorylated by ITK leading to the recruitment of VAV1 to LAT-containing complexes. 'Lys-63'-linked ubiquitinated by TRAF6. Expressed in NK cells. Present in lymph node, spleen and thymus (at protein level).

It is found in the cell membrane. In terms of biological role, required for TCR (T-cell antigen receptor)- and pre-TCR-mediated signaling, both in mature T-cells and during their development. Involved in FCGR3 (low affinity immunoglobulin gamma Fc region receptor III)-mediated signaling in natural killer cells and FCER1 (high affinity immunoglobulin epsilon receptor)-mediated signaling in mast cells. Couples activation of these receptors and their associated kinases with distal intracellular events such as mobilization of intracellular calcium stores, PKC activation, MAPK activation or cytoskeletal reorganization through the recruitment of PLCG1, GRB2, GRAP2, and other signaling molecules. This Rattus norvegicus (Rat) protein is Linker for activation of T-cells family member 1 (Lat).